Here is a 494-residue protein sequence, read N- to C-terminus: Maintenance of mitochondrial morphology protein 1 (494 aa).

Residues 1–25 are Lumenal-facing; the sequence is MGDDQSLRSTVAENDISANLSFTQG. The chain crosses the membrane as a helical span at residues 26–46; the sequence is FLLGQLSVVLLIGAFIKFFIF. Residues 47–494 are Cytoplasmic-facing; the sequence is GEAPPPPSRG…GTLPGGAAAN (448 aa). Disordered regions lie at residues 53-99, 278-330, and 395-494; these read PSRG…VPSS, PPLH…KSNV, and RTGV…AAAN. The span at 57–67 shows a compositional bias: basic residues; it reads LSHRASTHRRS. Composition is skewed to polar residues over residues 68 to 81 and 88 to 99; these read NSIYTINPNEGTSR and STSNVLRPVPSS. One can recognise an SMP-LTD domain in the interval 134 to 387; the sequence is QPESLDWFNV…EPRVQVVGLP (254 aa). Pro residues predominate over residues 278–290; sequence PPLHTPSPSPSPP. Polar residues-rich tracts occupy residues 300-318 and 406-415; these read THPTNGSREPTQEAPNAQE and TGSNAASRSA. Positions 425-437 are enriched in basic and acidic residues; it reads RADDIGREPDGLR.

The protein belongs to the MMM1 family. Homodimer. Component of the ER-mitochondria encounter structure (ERMES) or MDM complex, composed of mmm1, mdm10, mdm12 and mdm34. A mmm1 homodimer associates with one molecule of mdm12 on each side in a pairwise head-to-tail manner, and the SMP-LTD domains of mmm1 and mdm12 generate a continuous hydrophobic tunnel for phospholipid trafficking.

It localises to the endoplasmic reticulum membrane. Functionally, component of the ERMES/MDM complex, which serves as a molecular tether to connect the endoplasmic reticulum (ER) and mitochondria. Components of this complex are involved in the control of mitochondrial shape and protein biogenesis, and function in nonvesicular lipid trafficking between the ER and mitochondria. The mdm12-mmm1 subcomplex functions in the major beta-barrel assembly pathway that is responsible for biogenesis of all outer membrane beta-barrel proteins, and acts in a late step after the SAM complex. The mdm10-mdm12-mmm1 subcomplex further acts in the TOM40-specific pathway after the action of the mdm12-mmm1 complex. Essential for establishing and maintaining the structure of mitochondria and maintenance of mtDNA nucleoids. The polypeptide is Maintenance of mitochondrial morphology protein 1 (Aspergillus oryzae (strain ATCC 42149 / RIB 40) (Yellow koji mold)).